The primary structure comprises 61 residues: Small ribosomal subunit protein uS14B (61 aa).

Positions 24, 27, 40, and 43 each coordinate Zn(2+).

The protein belongs to the universal ribosomal protein uS14 family. Zinc-binding uS14 subfamily. In terms of assembly, part of the 30S ribosomal subunit. Contacts proteins S3 and S10. The cofactor is Zn(2+).

Its function is as follows. Binds 16S rRNA, required for the assembly of 30S particles and may also be responsible for determining the conformation of the 16S rRNA at the A site. The chain is Small ribosomal subunit protein uS14B from Salinispora arenicola (strain CNS-205).